The sequence spans 485 residues: Ribulose bisphosphate carboxylase large chain (485 aa).

Residues 1-2 (MS) constitute a propeptide that is removed on maturation. P3 is modified (N-acetylproline). Position 14 is an N6,N6,N6-trimethyllysine (K14). N123 and T173 together coordinate substrate. K175 (proton acceptor) is an active-site residue. K177 provides a ligand contact to substrate. 3 residues coordinate Mg(2+): K201, D203, and E204. K201 carries the N6-carboxylysine modification. Catalysis depends on H294, which acts as the Proton acceptor. Residues R295, H327, and S379 each coordinate substrate.

This sequence belongs to the RuBisCO large chain family. Type I subfamily. As to quaternary structure, heterohexadecamer of 8 large chains and 8 small chains; disulfide-linked. The disulfide link is formed within the large subunit homodimers. Mg(2+) serves as cofactor. Post-translationally, the disulfide bond which can form in the large chain dimeric partners within the hexadecamer appears to be associated with oxidative stress and protein turnover.

The protein localises to the plastid. Its subcellular location is the chloroplast. It catalyses the reaction 2 (2R)-3-phosphoglycerate + 2 H(+) = D-ribulose 1,5-bisphosphate + CO2 + H2O. The catalysed reaction is D-ribulose 1,5-bisphosphate + O2 = 2-phosphoglycolate + (2R)-3-phosphoglycerate + 2 H(+). Functionally, ruBisCO catalyzes two reactions: the carboxylation of D-ribulose 1,5-bisphosphate, the primary event in carbon dioxide fixation, as well as the oxidative fragmentation of the pentose substrate in the photorespiration process. Both reactions occur simultaneously and in competition at the same active site. The protein is Ribulose bisphosphate carboxylase large chain of Bartlettina sordida (Purple torch).